Consider the following 376-residue polypeptide: 23S rRNA (uracil(747)-C(5))-methyltransferase RlmC (376 aa).

C3, C11, C14, and C87 together coordinate [4Fe-4S] cluster. 4 residues coordinate S-adenosyl-L-methionine: Q212, F241, E262, and N307. C334 acts as the Nucleophile in catalysis.

It belongs to the class I-like SAM-binding methyltransferase superfamily. RNA M5U methyltransferase family. RlmC subfamily.

It carries out the reaction uridine(747) in 23S rRNA + S-adenosyl-L-methionine = 5-methyluridine(747) in 23S rRNA + S-adenosyl-L-homocysteine + H(+). Catalyzes the formation of 5-methyl-uridine at position 747 (m5U747) in 23S rRNA. The protein is 23S rRNA (uracil(747)-C(5))-methyltransferase RlmC of Yersinia pseudotuberculosis serotype O:1b (strain IP 31758).